The primary structure comprises 436 residues: KICSTOR complex protein kaptin (436 aa).

Position 1 is an N-acetylmethionine (methionine 1).

Part of the KICSTOR complex composed of KPTN, ITFG2, KICS2 and SZT2. SZT2 probably serves as a link between the other three proteins in the KICSTOR complex and mediates the direct interaction with the GATOR1 complex. May associate with F-actin filaments.

It is found in the lysosome membrane. It localises to the cell projection. Its subcellular location is the lamellipodium. The protein resides in the stereocilium. As part of the KICSTOR complex functions in the amino acid-sensing branch of the TORC1 signaling pathway. Recruits, in an amino acid-independent manner, the GATOR1 complex to the lysosomal membranes and allows its interaction with GATOR2 and the RAG GTPases. Functions upstream of the RAG GTPases and is required to negatively regulate mTORC1 signaling in absence of amino acids. In absence of the KICSTOR complex mTORC1 is constitutively localized to the lysosome and activated. The KICSTOR complex is also probably involved in the regulation of mTORC1 by glucose. The sequence is that of KICSTOR complex protein kaptin from Homo sapiens (Human).